A 777-amino-acid polypeptide reads, in one-letter code: Cullin-3 (777 aa).

Residues 568–596 (YPPPKASMSNEENGPGPSSSGESMKERKP) are disordered. Residues 576 to 589 (SNEENGPGPSSSGE) are compositionally biased toward low complexity. The Cullin neddylation domain occupies 707-769 (DRKLEVEAAI…REYLARDEHD (63 aa)). Residue K721 forms a Glycyl lysine isopeptide (Lys-Gly) (interchain with G-Cter in NEDD8) linkage.

This sequence belongs to the cullin family. Probable component of multiple cullin-RING-based BCB (BTB-CUL3-BTB) E3 ubiquitin-protein ligase complexes formed by cul-3, rbx-1 and a variable BTB domain-containing protein acting as both, adapter to cullin and substrate recognition component. Interacts with bath-15, bath-40, bath-41, bath-42, C17F4.8, tag-303, D2045.8, F57C2.1, ZC239.15 and B0281.5. Interacts with mel-26 (via BTB domain). Interacts with dcn-1. In terms of processing, neddylated. Deneddylated via its interaction with the COP9 signalosome (CSN) complex.

The protein localises to the cytoplasm. It is found in the nucleus. Its pathway is protein modification; protein ubiquitination. Its function is as follows. Probable core component of multiple cullin-RING-based BCB (BTB-CUL3-BTB) E3 ubiquitin-protein ligase complexes which mediate the ubiquitination and subsequent proteasomal degradation of target proteins. Probably acts as a scaffold protein which may contribute to catalysis through positioning of the substrate and the ubiquitin-conjugating enzyme. Required to target mei-3/katanin for degradation at the meiosis to mitosis transition via its neddylation and deneddylation. Functions in ubiquitin-mediated degradation of CKIs to target cki-1 for degradation. Regulates microtubule stability in the early embryo. In body wall muscles, involved in the organization of myosin thick filaments, likely by regulating the degradation of microtubule severing protein mei-1 downstream of unc-89. Together with spop-1, may promote the ubiquitination and proteasomal degradation of target bromodomain-containing proteins such as bet-1. The sequence is that of Cullin-3 from Caenorhabditis elegans.